The primary structure comprises 354 residues: Ribosomal RNA large subunit methyltransferase M (354 aa).

S-adenosyl-L-methionine-binding positions include S183, 216-219 (SPGG), D235, D255, and D271. Residue K300 is the Proton acceptor of the active site.

It belongs to the class I-like SAM-binding methyltransferase superfamily. RNA methyltransferase RlmE family. RlmM subfamily. As to quaternary structure, monomer.

The protein localises to the cytoplasm. It carries out the reaction cytidine(2498) in 23S rRNA + S-adenosyl-L-methionine = 2'-O-methylcytidine(2498) in 23S rRNA + S-adenosyl-L-homocysteine + H(+). Catalyzes the 2'-O-methylation at nucleotide C2498 in 23S rRNA. In Pseudomonas putida (strain GB-1), this protein is Ribosomal RNA large subunit methyltransferase M.